The following is a 205-amino-acid chain: Recombination protein RecR (205 aa).

The C4-type zinc finger occupies 58–75; that stretch reads CSVCQNVTDRDADPCYIC. Positions 83–182 constitute a Toprim domain; the sequence is SVICVVESPA…SVTKIARGIP (100 aa).

It belongs to the RecR family.

In terms of biological role, may play a role in DNA repair. It seems to be involved in an RecBC-independent recombinational process of DNA repair. It may act with RecF and RecO. This Chlorobium limicola (strain DSM 245 / NBRC 103803 / 6330) protein is Recombination protein RecR.